A 337-amino-acid polypeptide reads, in one-letter code: MAVRKDTKNGKWLAEVYVNGNASRKWFLTKGDALRFYNQAKEQTTSAVDSVQVLESSDLPALSFYVQEWFDLHGKTLSDGKARLAKLKNLCSNLGDPPANEFNAKIFADYRKRRLDGEFSVNKNNPPKEATVNREHAYLRAVFNELKSLRKWTTENPLDGVRLFKERETELAFLYERDIYRLLAECDNSRNPDLGLIVRICLATGARWSEAETLTQSQVMPYKITFTNTKSKKNRTVPISKELFDMLPKKRGRLFNDAYESFENAVLRAEIELPKGQLTHVLRHTFASHFMMNGGNILVLKEILGHSTIEMTMRYAHFAPSHLESAVKFNPLSNPAQ.

Residues 60-147 (PALSFYVQEW…YLRAVFNELK (88 aa)) enclose the Core-binding (CB) domain. The region spanning 169–328 (TELAFLYERD…APSHLESAVK (160 aa)) is the Tyr recombinase domain. Active-site residues include Arg-207, Lys-230, His-280, Arg-283, and His-306. The active-site O-(3'-phospho-DNA)-tyrosine intermediate is Tyr-315.

Belongs to the 'phage' integrase family. Homodimer.

Its function is as follows. Integrase is necessary for integration of the phage into the host genome by site-specific recombination. In conjunction with excisionase, integrase is also necessary for excision of the prophage from the host genome. The sequence is that of Integrase (int) from Haemophilus phage HP1 (strain HP1c1) (Bacteriophage HP1).